A 997-amino-acid chain; its full sequence is Mannuronan C5-epimerase AlgE5 (997 aa).

PbH1 repeat units lie at residues 133-155, 157-179, 180-202, 204-226, 257-279, 280-315, and 320-359; these read DRDVTLERVEIREMSGYGFDPHE, TINLTIRDSVAHDNGLDGFVADF, QIGGVFENNVSYNNDRHGFNIVT, TNDFVLSNNVAYGNGGAGLVIQR, AHDVTLQNAEIYGNGLYGVRVYG, AEDVQILDNYIHDNSQSGSYAEILLQSYDDTAGVSG, and TTGTWIEGNTIVGSANSTYGIQERADGTDYSSLYANSVSN. 10 Hemolysin-type calcium-binding repeats span residues 388–403, 406–422, 424–439, 557–573, 574–590, 695–709, 712–729, 828–839, 846–862, and 864–880; these read GTTGNDTLTGSEAHET, GLDGNDRLNGGAGNDIL, GGAGRDNLTGGAGADL, GHAGNDTLDGAGGDDIL, VGGAGRDTLTGGAGADL, GSAGNDSLQGTAADE, HGGAGRDTLSGGAGADVF, GSDGNDTLDGGS, GGAGNDSLDGGAGNDIL, and GGAGRDTLSGGSGSDIF.

It belongs to the D-mannuronate C5-epimerase family. It depends on Ca(2+) as a cofactor.

The protein resides in the secreted. It carries out the reaction [(1-&gt;4)-beta-D-mannuronosyl](n) = [alginate](n). The protein operates within glycan biosynthesis; alginate biosynthesis. With respect to regulation, inhibited by zinc. Functionally, converts beta-D-mannuronic acid (M) to alpha-L-guluronic acid (G), producing a polymer with gel-forming capacity, required for the formation of the cyst coat. The protein is Mannuronan C5-epimerase AlgE5 of Azotobacter vinelandii.